We begin with the raw amino-acid sequence, 115 residues long: MQQLIEEITKEQLRTDLPAFRPGDTLRVHVKVVEGTRERIQIFEGVVIKRRGGGISETFTVRKISYGVGVERTFPVHTPKIANIEVVRHGKVRRAKLYYLRELRGKAARIKEIRR.

The protein belongs to the bacterial ribosomal protein bL19 family.

In terms of biological role, this protein is located at the 30S-50S ribosomal subunit interface and may play a role in the structure and function of the aminoacyl-tRNA binding site. In Bacillus pumilus (strain SAFR-032), this protein is Large ribosomal subunit protein bL19.